The chain runs to 114 residues: Large ribosomal subunit protein bL19 (114 aa).

It belongs to the bacterial ribosomal protein bL19 family.

Its function is as follows. This protein is located at the 30S-50S ribosomal subunit interface and may play a role in the structure and function of the aminoacyl-tRNA binding site. This chain is Large ribosomal subunit protein bL19, found in Clostridium botulinum (strain Loch Maree / Type A3).